Consider the following 113-residue polypeptide: Tyrosine-protein phosphatase 15 (113 aa).

A Tyrosine-protein phosphatase domain is found at Trp-1 to Ile-113.

The protein belongs to the protein-tyrosine phosphatase family.

The enzyme catalyses O-phospho-L-tyrosyl-[protein] + H2O = L-tyrosyl-[protein] + phosphate. The sequence is that of Tyrosine-protein phosphatase 15 (STY-15) from Styela plicata (Wrinkled sea squirt).